Consider the following 312-residue polypeptide: MIVEVFFRNFYRNYAKFDIDAVEKREFAFQYFEGGIVRHRAFKTLEELKKFVIEKTPRHIYHSSAYYERPGEEDMERKGWLGADLIFDIDGDHLDTEACRESKLVSIACLNDAKEEANKLIDVLTGELGLKPRRVVFSGNRGFHIHVSEEEVLTLGAKERRELVNYLKAVGFDPSRFVVKKGRKKVVLYEEEVGGNLFRIRQGVEDPRALKIEIDEVVTQDIHRLIRVPGSINGKTGLLALPLSQQDLEKDVEQIVERAIVFKKGNLKLRFNKTFEGAVLFEKINAREGDVKVLPAYLAIYLELQEIGKIYD.

Catalysis depends on residues aspartate 88, aspartate 90, and aspartate 215.

Belongs to the eukaryotic-type primase small subunit family. Heterodimer of a small subunit (PriS) and a large subunit (PriL). The cofactor is Mg(2+). Mn(2+) serves as cofactor.

In terms of biological role, catalytic subunit of DNA primase, an RNA polymerase that catalyzes the synthesis of short RNA molecules used as primers for DNA polymerase during DNA replication. The small subunit contains the primase catalytic core and has DNA synthesis activity on its own. Binding to the large subunit stabilizes and modulates the activity, increasing the rate of DNA synthesis while decreasing the length of the DNA fragments, and conferring RNA synthesis capability. The DNA polymerase activity may enable DNA primase to also catalyze primer extension after primer synthesis. May also play a role in DNA repair. In Pyrobaculum islandicum (strain DSM 4184 / JCM 9189 / GEO3), this protein is DNA primase small subunit PriS.